A 322-amino-acid polypeptide reads, in one-letter code: Mas-related G-protein coupled receptor member X3 (322 aa).

Residues 1 to 31 (MDSTIPVLGTELTPINGREETPCYKQTLSFT) are Extracellular-facing. The helical transmembrane segment at 32 to 52 (GLTCIVSLVALTGNAVVLWLL) threads the bilayer. Residues 53–60 (GCRMRRNA) are Cytoplasmic-facing. A helical transmembrane segment spans residues 61 to 81 (VSIYILNLVAADFLFLSGHII). Residues 82–96 (CSPLRLINIRHPISK) lie on the Extracellular side of the membrane. A helical membrane pass occupies residues 97 to 117 (ILSPVMTFPYFIGLSMLSAIS). Residues 118 to 140 (TERCLSILWPIWYHCRRPRYLSS) lie on the Cytoplasmic side of the membrane. The helical transmembrane segment at 141–161 (VMCVLLWALSLLRSILEWMFC) threads the bilayer. Over 162–177 (DFLFSGANSVWCETSD) the chain is Extracellular. The chain crosses the membrane as a helical span at residues 178 to 198 (FITIAWLVFLCVVLCGSSLVL). Residues 199-213 (LVRILCGSRKMPLTR) lie on the Cytoplasmic side of the membrane. The helical transmembrane segment at 214-234 (LYVTILLTVLVFLLCGLPFGI) threads the bilayer. Residues 235–254 (QWALFSRIHLDWKVLFCHVH) are Extracellular-facing. A helical transmembrane segment spans residues 255–275 (LVSIFLSALNSSANPIIYFFV). The Cytoplasmic segment spans residues 276 to 322 (GSFRQRQNRQNLKLVLQRALQDTPEVDEGGGWLPQETLELSGSRLEQ).

This sequence belongs to the G-protein coupled receptor 1 family. Mas subfamily. In terms of tissue distribution, uniquely localized in a subset of small dorsal root and trigeminal sensory neurons.

It localises to the cell membrane. In terms of biological role, orphan receptor. Probably involved in the function of nociceptive neurons. May regulate nociceptor function and/or development, including the sensation or modulation of pain. Potently activated by enkephalins. The sequence is that of Mas-related G-protein coupled receptor member X3 (MRGPRX3) from Homo sapiens (Human).